A 300-amino-acid chain; its full sequence is Dihydroorotate dehydrogenase B (NAD(+)), catalytic subunit (300 aa).

FMN contacts are provided by residues Ser-20 and 44–45 (KG). Residues Lys-44 and 68-72 (NSVGL) each bind substrate. Residues Asn-98 and Asn-124 each contribute to the FMN site. Asn-124 provides a ligand contact to substrate. Residue Cys-127 is the Nucleophile of the active site. FMN-binding residues include Lys-162 and Ile-188. 189 to 190 (NT) provides a ligand contact to substrate. Residues Gly-214, 240 to 241 (GG), and 262 to 263 (GT) contribute to the FMN site.

It belongs to the dihydroorotate dehydrogenase family. Type 1 subfamily. Heterotetramer of 2 PyrK and 2 PyrD type B subunits. The cofactor is FMN.

It localises to the cytoplasm. It catalyses the reaction (S)-dihydroorotate + NAD(+) = orotate + NADH + H(+). The protein operates within pyrimidine metabolism; UMP biosynthesis via de novo pathway; orotate from (S)-dihydroorotate (NAD(+) route): step 1/1. Catalyzes the conversion of dihydroorotate to orotate with NAD(+) as electron acceptor. The chain is Dihydroorotate dehydrogenase B (NAD(+)), catalytic subunit (pyrD) from Caldicellulosiruptor bescii (strain ATCC BAA-1888 / DSM 6725 / KCTC 15123 / Z-1320) (Anaerocellum thermophilum).